The primary structure comprises 202 residues: Small ribosomal subunit protein uS4 (202 aa).

The tract at residues 15-42 (LGDLPGLTRKAAKRSYPPGQHGQARRKR) is disordered. One can recognise an S4 RNA-binding domain in the interval 90–152 (NRLDNVCFRL…KCSKQLAEGN (63 aa)).

It belongs to the universal ribosomal protein uS4 family. Part of the 30S ribosomal subunit. Contacts protein S5. The interaction surface between S4 and S5 is involved in control of translational fidelity.

Functionally, one of the primary rRNA binding proteins, it binds directly to 16S rRNA where it nucleates assembly of the body of the 30S subunit. In terms of biological role, with S5 and S12 plays an important role in translational accuracy. This chain is Small ribosomal subunit protein uS4, found in Synechococcus sp. (strain WH7803).